A 197-amino-acid polypeptide reads, in one-letter code: Short chain dehydrogenase ausX (197 aa).

Residues Ile-49, Asp-95, Arg-157, and Tyr-189 each contribute to the NADP(+) site. Catalysis depends on Tyr-189, which acts as the Proton acceptor. The active-site Proton donor is the Tyr-189.

It belongs to the short-chain dehydrogenases/reductases (SDR) family.

The protein operates within secondary metabolite biosynthesis; terpenoid biosynthesis. Short chain dehydrogenase; part of the gene cluster A that mediates the biosynthesis of austinol and dehydroaustinol, two fungal meroterpenoids. The first step of the pathway is the synthesis of 3,5-dimethylorsellinic acid by the polyketide synthase ausA. 3,5-dimethylorsellinic acid is then prenylated by the polyprenyl transferase ausN. Further epoxidation by the FAD-dependent monooxygenase ausM and cyclization by the probable terpene cyclase ausL lead to the formation of protoaustinoid A. Protoaustinoid A is then oxidized to spiro-lactone preaustinoid A3 by the combined action of the FAD-binding monooxygenases ausB and ausC, and the dioxygenase ausE. Acid-catalyzed keto-rearrangement and ring contraction of the tetraketide portion of preaustinoid A3 by ausJ lead to the formation of preaustinoid A4. The aldo-keto reductase ausK, with the help of ausH, is involved in the next step by transforming preaustinoid A4 into isoaustinone which is in turn hydroxylated by the P450 monooxygenase ausI to form austinolide. Finally, the cytochrome P450 monooxygenase ausG modifies austinolide to austinol. Austinol can be further modified to dehydroaustinol which forms a diffusible complex with diorcinol that initiates conidiation. Due to genetic rearrangements of the clusters and the subsequent loss of some enzymes, the end products of the Emericella nidulans austinoid biosynthesis clusters are austinol and dehydroaustinol, even if additional enzymes, such as the O-acetyltransferase ausQ and the cytochrome P450 monooxygenase ausR are still functional. The chain is Short chain dehydrogenase ausX from Emericella nidulans (strain FGSC A4 / ATCC 38163 / CBS 112.46 / NRRL 194 / M139) (Aspergillus nidulans).